We begin with the raw amino-acid sequence, 306 residues long: Agmatinase (306 aa).

Residues His-128, Asp-151, His-153, Asp-155, Asp-232, and Asp-234 each coordinate Mn(2+).

The protein belongs to the arginase family. Agmatinase subfamily. The cofactor is Mn(2+).

It catalyses the reaction agmatine + H2O = urea + putrescine. It functions in the pathway amine and polyamine biosynthesis; putrescine biosynthesis via agmatine pathway; putrescine from agmatine: step 1/1. In terms of biological role, catalyzes the formation of putrescine from agmatine. This is Agmatinase (speB) from Proteus mirabilis.